A 234-amino-acid polypeptide reads, in one-letter code: 2-C-methyl-D-erythritol 4-phosphate cytidylyltransferase (234 aa).

This sequence belongs to the IspD/TarI cytidylyltransferase family. IspD subfamily.

It carries out the reaction 2-C-methyl-D-erythritol 4-phosphate + CTP + H(+) = 4-CDP-2-C-methyl-D-erythritol + diphosphate. The protein operates within isoprenoid biosynthesis; isopentenyl diphosphate biosynthesis via DXP pathway; isopentenyl diphosphate from 1-deoxy-D-xylulose 5-phosphate: step 2/6. In terms of biological role, catalyzes the formation of 4-diphosphocytidyl-2-C-methyl-D-erythritol from CTP and 2-C-methyl-D-erythritol 4-phosphate (MEP). This chain is 2-C-methyl-D-erythritol 4-phosphate cytidylyltransferase, found in Photobacterium profundum (strain SS9).